The primary structure comprises 252 residues: Ubiquitin carboxyl-terminal hydrolase isozyme L1 (252 aa).

At Met1 the chain carries N-acetylmethionine. A UCH catalytic domain is found at 2 to 250; the sequence is QLKPMEINPE…VRFSAVALCK (249 aa). An interaction with ubiquitin region spans residues 5 to 10; the sequence is PMEINP. Residue Cys119 is the Nucleophile of the active site. Phosphoserine is present on Ser154. His190 serves as the catalytic Proton donor. The segment at 240–245 is interaction with ubiquitin; the sequence is EVRFSA. Cys249 is lipidated: S-farnesyl cysteine. Positions 250–252 are cleaved as a propeptide — removed in mature form; that stretch reads KAA.

This sequence belongs to the peptidase C12 family. In terms of assembly, monomer. Homodimer. Interacts with COPS5 and SNCA. Post-translationally, O-glycosylated. Neurons and cells of the diffuse neuroendocrine system and their tumors.

It localises to the cytoplasm. The protein localises to the endoplasmic reticulum membrane. The catalysed reaction is Thiol-dependent hydrolysis of ester, thioester, amide, peptide and isopeptide bonds formed by the C-terminal Gly of ubiquitin (a 76-residue protein attached to proteins as an intracellular targeting signal).. In terms of biological role, ubiquitin-protein hydrolase involved both in the processing of ubiquitin precursors and of ubiquitinated proteins. This enzyme is a thiol protease that recognizes and hydrolyzes a peptide bond at the C-terminal glycine of ubiquitin. Also binds to free monoubiquitin and may prevent its degradation in lysosomes. The homodimer may have ATP-independent ubiquitin ligase activity. This Bos taurus (Bovine) protein is Ubiquitin carboxyl-terminal hydrolase isozyme L1 (UCHL1).